The following is a 120-amino-acid chain: NAD(P)H-quinone oxidoreductase subunit 3, chloroplastic (120 aa).

The next 3 helical transmembrane spans lie at 9–29 (IFWAFLLISSVIPILAFLLSG), 64–84 (MFALVFVVFDVETVFLYPWAM), and 88–108 (VLGVSVFIEALIFVLILIVGL).

It belongs to the complex I subunit 3 family. In terms of assembly, NDH is composed of at least 16 different subunits, 5 of which are encoded in the nucleus.

The protein localises to the plastid. It is found in the chloroplast thylakoid membrane. It catalyses the reaction a plastoquinone + NADH + (n+1) H(+)(in) = a plastoquinol + NAD(+) + n H(+)(out). It carries out the reaction a plastoquinone + NADPH + (n+1) H(+)(in) = a plastoquinol + NADP(+) + n H(+)(out). Its function is as follows. NDH shuttles electrons from NAD(P)H:plastoquinone, via FMN and iron-sulfur (Fe-S) centers, to quinones in the photosynthetic chain and possibly in a chloroplast respiratory chain. The immediate electron acceptor for the enzyme in this species is believed to be plastoquinone. Couples the redox reaction to proton translocation, and thus conserves the redox energy in a proton gradient. The sequence is that of NAD(P)H-quinone oxidoreductase subunit 3, chloroplastic from Fagopyrum esculentum subsp. ancestrale (Wild buckwheat).